A 540-amino-acid polypeptide reads, in one-letter code: MLO protein homolog 1 (540 aa).

Topologically, residues 1 to 16 are extracellular; sequence MAGGRSGSRELPETPT. A helical membrane pass occupies residues 17-37; sequence WAVAVVCAVLVLVSVAMEHGL. The Cytoplasmic portion of the chain corresponds to 38–60; it reads HNLSHWFRRRQKKAMGDALDKIK. A helical membrane pass occupies residues 61-81; the sequence is AELMLLGFISLLLTVAQAPIS. The Extracellular portion of the chain corresponds to 82 to 142; it reads KICIPKSAAN…MSAKSMHQLH (61 aa). The chain crosses the membrane as a helical span at residues 143–163; the sequence is IFIFVLAVFHVTYCVITMGLG. The Cytoplasmic segment spans residues 164–265; it reads RLKMKKWKKW…IKRSLEDDFK (102 aa). The chain crosses the membrane as a helical span at residues 266 to 286; that stretch reads VVVGISLPLWFVGILVLFLDI. Histidine 287 is a topological domain (extracellular). The helical transmembrane segment at 288–308 threads the bilayer; that stretch reads GLGTLIWISFVPLIIVLLVGT. The Cytoplasmic segment spans residues 309–347; it reads KLEMVIMQMAQEIQDRATVIQGAPVVEPSNKYFWFNRPD. The helical transmembrane segment at 348–368 threads the bilayer; sequence WVLFFIHLTLFHNAFQMAHFV. Topologically, residues 369 to 383 are extracellular; the sequence is WTMATPGLKKCFHEN. Residues 384–404 form a helical membrane-spanning segment; it reads IWLSIVEVIVGISLQVLCSYI. The Cytoplasmic portion of the chain corresponds to 405–540; that stretch reads TFPLYALVTQ…DSDFSFSAQR (136 aa). The interval 426–447 is calmodulin-binding; sequence EQTMKALMNWRKKAMEKKKVRD. The disordered stretch occupies residues 468-526; sequence ASPVHLLQDHRARSDDPPSPITVASPPAPEEDIYPVPAAAASRQLLDDPPDRRWMASSS. Basic and acidic residues-rich tracts occupy residues 474-483 and 512-521; these read LQDHRARSDD and LLDDPPDRRW.

It belongs to the MLO family.

It localises to the membrane. Functionally, may be involved in modulation of pathogen defense and leaf cell death. Activity seems to be regulated by Ca(2+)-dependent calmodulin binding and seems not to require heterotrimeric G proteins. The chain is MLO protein homolog 1 (MLO1) from Oryza sativa subsp. japonica (Rice).